Consider the following 353-residue polypeptide: Quinolinate synthase (353 aa).

The iminosuccinate site is built by His-47 and Ser-68. Cys-113 provides a ligand contact to [4Fe-4S] cluster. Iminosuccinate is bound by residues 139–141 (YAN) and Ser-156. Position 200 (Cys-200) interacts with [4Fe-4S] cluster. Residues 226 to 228 (HPE) and Thr-243 contribute to the iminosuccinate site. Cys-297 lines the [4Fe-4S] cluster pocket.

Belongs to the quinolinate synthase family. Type 1 subfamily. The cofactor is [4Fe-4S] cluster.

Its subcellular location is the cytoplasm. The catalysed reaction is iminosuccinate + dihydroxyacetone phosphate = quinolinate + phosphate + 2 H2O + H(+). It functions in the pathway cofactor biosynthesis; NAD(+) biosynthesis; quinolinate from iminoaspartate: step 1/1. In terms of biological role, catalyzes the condensation of iminoaspartate with dihydroxyacetone phosphate to form quinolinate. This Vibrio campbellii (strain ATCC BAA-1116) protein is Quinolinate synthase.